We begin with the raw amino-acid sequence, 878 residues long: E3 ubiquitin-protein ligase SH3RF3 (878 aa).

The tract at residues 19 to 40 (RGEGEDRQGEQQRGAQARTEED) is disordered. The segment at 52–93 (CSVCLERLDTTAKVLPCQHTFCRRCLESIVCSRHELRCPECR) adopts an RING-type zinc-finger fold. The interval 120-145 (PRTGASPGSSPPARPGPGTFSALAGG) is disordered. 2 SH3 domains span residues 187–246 (SQLP…CVRP) and 249–312 (QALP…LNDS). Residues 364 to 433 (RVDSKKNAKK…TVPTQDSSSA (70 aa)) are interaction with RAC1. The residue at position 395 (serine 395) is a Phosphoserine. Positions 458-519 (LPLNVYLALY…PGNYVTPVSR (62 aa)) constitute an SH3 3 domain. Disordered stretches follow at residues 574 to 659 (QHPA…CPRP) and 688 to 758 (PISG…MGPE). 4 stretches are compositionally biased toward polar residues: residues 590 to 609 (AQPT…THAS), 618 to 633 (ATVS…SRLP), 643 to 653 (ASPQHGQQSPA), and 690 to 699 (SGLSTPSLIN). Basic and acidic residues predominate over residues 703–716 (KPDDKKNEKKEKKS). Polar residues predominate over residues 741 to 752 (HDPQSAMDTSLQ). Serine 792 carries the phosphoserine modification. In terms of domain architecture, SH3 4 spans 819 to 878 (LPRERYRVVVSYPPQSEAEIELKEGDIVFVHKKHEDGWFKGTLQRNGRTGLFPGSFVESF).

Belongs to the SH3RF family. As to quaternary structure, interacts (via SH3 domain 3) with PAK2. Interacts with RAC1 (GTP-bound form). Post-translationally, autoubiquitinated.

The enzyme catalyses S-ubiquitinyl-[E2 ubiquitin-conjugating enzyme]-L-cysteine + [acceptor protein]-L-lysine = [E2 ubiquitin-conjugating enzyme]-L-cysteine + N(6)-ubiquitinyl-[acceptor protein]-L-lysine.. The protein operates within protein modification; protein ubiquitination. Functionally, has E3 ubiquitin-protein ligase activity. The protein is E3 ubiquitin-protein ligase SH3RF3 (Sh3rf3) of Mus musculus (Mouse).